A 427-amino-acid polypeptide reads, in one-letter code: Sensor histidine kinase ArsS (427 aa).

The next 2 membrane-spanning stretches (helical) occupy residues 3–23 and 131–151; these read FSIFFKVVALFMITLFSFGAF and NYFLAITVGLLLILFLFLFVL. The HAMP domain occupies 151-203; it reads LQSLLPLRELRSQVKPFAQGDKSVSCKSKQKDEIGDLANEFDNCILKINAMNE. The region spanning 211–398 is the Histidine kinase domain; it reads SIMHELRTPI…LSYHYSNGRI (188 aa). At His-214 the chain carries Phosphohistidine; by autocatalysis.

Autophosphorylated.

The protein localises to the membrane. The catalysed reaction is ATP + protein L-histidine = ADP + protein N-phospho-L-histidine.. Its function is as follows. Member of the two-component regulatory system ArsS/ArsR that regulates genes involved in biofilm formation and acid adaptation by acting on major ammonia-producing pathways. Functions as a sensor protein kinase which is autophosphorylated at a histidine residue and transfers its phosphate group to the conserved aspartic acid residue in the regulatory domain of ArsR. In turn, ArsR binds to the upstream promoter regions of target genes including ureA, amiE and amiF to positively regulate their expression in response to acidic pH. Also participates in acidic acclimatation in a phosphorylation-independent pathway by regulating acid-induced trafficking of urease and its accessory proteins to the inner membrane. The chain is Sensor histidine kinase ArsS from Helicobacter pylori (strain ATCC 700392 / 26695) (Campylobacter pylori).